Here is a 160-residue protein sequence, read N- to C-terminus: uncharacterized protein (160 aa).

Residues 69–145 (NQLLNMMAQA…EQREHVKEQR (77 aa)) are a coiled coil. Disordered regions lie at residues 82–109 (GVRLQGRRQKKINPKRLQRQVSKELKNA) and 129–160 (KKKQIMKEQREHVKEQRYMLKKQKAKKKHRGK). Residues 86 to 99 (QGRRQKKINPKRLQ) show a composition bias toward basic residues. Residues 133–146 (IMKEQREHVKEQRY) are compositionally biased toward basic and acidic residues. The segment covering 147–160 (MLKKQKAKKKHRGK) has biased composition (basic residues).

This is an uncharacterized protein from Bacillus subtilis (strain 168).